We begin with the raw amino-acid sequence, 845 residues long: MPLSYQHFRKLLLLDDGTEAGPLEEELPRLADADLHRRVAEDLNLGNLNVSIPWTHKVGNFTGLYSSTVPIFNPEWQTPSFPKIHLQEDIINRCQQFVGPLTVNEKRRLKLIMPARFYPTHTKYLPLDKGIKPYYPDQVVNHYFQTRHYLHTLWKAGILYKRETTRSASFCGSPYSWEQELQHGRLVIKTSQRHGDESFCSQSSGILSRSSVGPCIRSQLKQSRLGLQPRQGRLASSQPSRSGSIRAKAHPSTRRYFGVEPSGSGHIDHSVNNSSSCLHQSAVRKAAYSHLSTSKRQSSSGHAVEFHCLPPNSAGSQSQGSVSSCWWLQFRNSKPCSEYCLSHLVNLREDWGPCDEHGEHHIRIPRTPARVTGGVFLVDKNPHNTAESRLVVDFSQFSRGISRVSWPKFAVPNLQSLTNLLSSNLSWLSLDVSAAFYHIPLHPAAMPHLLIGSSGLSRYVARLSSNSRINNNQYGTMQNLHDSCSRQLYVSLMLLYKTYGWKLHLYSHPIVLGFRKIPMGVGLSPFLLAQFTSAICSVVRRAFPHCLAFSYMDDVVLGAKSVQHRESLYTAVTNFLLSLGIHLNPNKTKRWGYSLNFMGYIIGSWGTLPQDHIVQKIKHCFRKLPVNRPIDWKVCQRIVGLLGFAAPFTQCGYPALMPLYACIQAKQAFTFSPTYKAFLSKQYMNLYPVARQRPGLCQVFADATPTGWGLAIGHQRMRGTFVAPLPIHTAELLAACFARSRSGAKLIGTDNSVVLSRKYTSFPWLLGCTANWILRGTSFVYVPSALNPADDPSRGRLGLSRPLLRLPFQPTTGRTSLYAVSPSVPSHLPVRVHFASPLHVAWRPP.

The tract at residues 1 to 179 (MPLSYQHFRK…FCGSPYSWEQ (179 aa)) is terminal protein domain (TP). The segment at 180-348 (ELQHGRLVIK…YCLSHLVNLR (169 aa)) is spacer. A disordered region spans residues 226-252 (GLQPRQGRLASSQPSRSGSIRAKAHPS). Residues 234–243 (LASSQPSRSG) are compositionally biased toward polar residues. Residues 349-692 (EDWGPCDEHG…YMNLYPVARQ (344 aa)) form a polymerase/reverse transcriptase domain (RT) region. A Reverse transcriptase domain is found at 359–602 (EHHIRIPRTP…YSLNFMGYII (244 aa)). 3 residues coordinate Mg(2+): Asp431, Asp553, and Asp554. A rnaseH domain (RH) region spans residues 693-845 (RPGLCQVFAD…SPLHVAWRPP (153 aa)).

It belongs to the hepadnaviridae P protein family.

It carries out the reaction DNA(n) + a 2'-deoxyribonucleoside 5'-triphosphate = DNA(n+1) + diphosphate. The enzyme catalyses Endonucleolytic cleavage to 5'-phosphomonoester.. Activated by host HSP70 and HSP40 in vitro to be able to bind the epsilon loop of the pgRNA. Because deletion of the RNase H region renders the protein partly chaperone-independent, the chaperones may be needed indirectly to relieve occlusion of the RNA-binding site by this domain. Inhibited by several reverse-transcriptase inhibitors: Lamivudine, Adefovir and Entecavir. Its function is as follows. Multifunctional enzyme that converts the viral RNA genome into dsDNA in viral cytoplasmic capsids. This enzyme displays a DNA polymerase activity that can copy either DNA or RNA templates, and a ribonuclease H (RNase H) activity that cleaves the RNA strand of RNA-DNA heteroduplexes in a partially processive 3'- to 5'-endonucleasic mode. Neo-synthesized pregenomic RNA (pgRNA) are encapsidated together with the P protein, and reverse-transcribed inside the nucleocapsid. Initiation of reverse-transcription occurs first by binding the epsilon loop on the pgRNA genome, and is initiated by protein priming, thereby the 5'-end of (-)DNA is covalently linked to P protein. Partial (+)DNA is synthesized from the (-)DNA template and generates the relaxed circular DNA (RC-DNA) genome. After budding and infection, the RC-DNA migrates in the nucleus, and is converted into a plasmid-like covalently closed circular DNA (cccDNA). The activity of P protein does not seem to be necessary for cccDNA generation, and is presumably released from (+)DNA by host nuclear DNA repair machinery. This chain is Protein P, found in Homo sapiens (Human).